The primary structure comprises 2669 residues: Nucleosome-remodeling factor subunit NURF301 (2669 aa).

Basic residues predominate over residues 1–12 (MSGRGSRKRGRP). Positions 1–121 (MSGRGSRKRG…EEDKSDNEDD (121 aa)) are required for function in nucleosome sliding. Residues 1-125 (MSGRGSRKRG…SDNEDDMLLT (125 aa)) form a disordered region. Positions 6–18 (SRKRGRPPKTPNE) form a DNA-binding region, a.T hook. Polar residues predominate over residues 38-56 (GKSQPSTPSASRGISPQSD). 5 positions are modified to phosphoserine: S40, S52, S55, S59, and S62. The segment covering 66–82 (HTNRSRGSAAKRGRGRK) has biased composition (basic residues). Over residues 109–125 (GDSEEDKSDNEDDMLLT) the composition is skewed to acidic residues. One can recognise a DDT domain in the interval 188 to 248 (NTHVLRALSI…LKAILREEDA (61 aa)). Residues 339-386 (DDHCRVCHRLGDLLCCETCPAVYHLECVDPPMNDVPTEDWQCGLCRSH) form a PHD-type 1 zinc finger. Residues 460–515 (RLHSQITERRDEIERQMKLTETLTNEHKHTKRSVIEIEQEAKNELLEKEVLDEDEK) are a coiled coil. The disordered stretch occupies residues 505–538 (LEKEVLDEDEKDGDAKSESQSIEGTKKQEECKMV). Positions 528–537 (GTKKQEECKM) are enriched in basic and acidic residues. A coiled-coil region spans residues 688-720 (LQRITSAEREERKKLEKREKRERDDEEERNRLA). Disordered regions lie at residues 1026-1048 (EGKR…AESE), 1135-1159 (TGLN…NQKS), and 1406-1425 (RSGL…EPQI). Position 1417 is a phosphoserine (S1417). T1527 carries the post-translational modification Phosphothreonine. Low complexity predominate over residues 1559–1590 (SRTGGANTAAAAASPTVGGSTSTQSNPSTSTP). Disordered stretches follow at residues 1559-1596 (SRTG…VQII), 2181-2203 (INNG…ITTN), and 2283-2307 (TNEW…QTDD). Residues 2283-2293 (TNEWETCSRGS) are compositionally biased toward polar residues. Positions 2338–2373 (KNDEVAELGEQKQSQLERHKELLKKNILRKRSLLER) form a coiled coil. A disordered region spans residues 2382–2432 (DVKTKVQRHVRPLSNASPDEQSENERSGEPNLDFKRTEVQNPRHGAGRPKK). Phosphoserine occurs at positions 2395, 2398, and 2403. Over residues 2404–2419 (ENERSGEPNLDFKRTE) the composition is skewed to basic and acidic residues. Residues 2481–2546 (EFICIDCKRA…EYVCPECQRK (66 aa)) form a PHD-type 2 zinc finger. The 105-residue stretch at 2556-2660 (KLTSNDVEEL…SYFVQKIKNF (105 aa)) folds into the Bromo domain.

This sequence belongs to the BPTF family. As to quaternary structure, component of the NURF complex composed of Caf1-55, E(bx), Nurf-38 and Iswi. Interacts with Trl. Interacts with histone H3-K4Me3.

The protein localises to the nucleus. Its function is as follows. Histone-binding component of NURF (nucleosome remodeling factor), a complex which catalyzes ATP-dependent nucleosome sliding and facilitates transcription of chromatin. Specifically recognizes H3 tails trimethylated on 'Lys-4' (H3K4me3), which mark transcription start sites of virtually all active genes. Required for homeotic gene expression, proper larval blood cell development, normal male X chromosome morphology, ecdysteroid signaling and metamorphosis. In Drosophila melanogaster (Fruit fly), this protein is Nucleosome-remodeling factor subunit NURF301 (E(bx)).